We begin with the raw amino-acid sequence, 350 residues long: Succinylglutamate desuccinylase (350 aa).

Zn(2+) contacts are provided by His71, Glu74, and His169. Glu233 is an active-site residue.

This sequence belongs to the AspA/AstE family. Succinylglutamate desuccinylase subfamily. The cofactor is Zn(2+).

It carries out the reaction N-succinyl-L-glutamate + H2O = L-glutamate + succinate. It functions in the pathway amino-acid degradation; L-arginine degradation via AST pathway; L-glutamate and succinate from L-arginine: step 5/5. Transforms N(2)-succinylglutamate into succinate and glutamate. This chain is Succinylglutamate desuccinylase, found in Pseudoalteromonas atlantica (strain T6c / ATCC BAA-1087).